Reading from the N-terminus, the 412-residue chain is Non-specific lipid-transfer protein-like 2 (412 aa).

The Microbody targeting signal signature appears at 410–412; that stretch reads SKI.

This sequence belongs to the thiolase-like superfamily. Thiolase family. As to expression, expressed in intestine, hypodermis and body-wall muscle.

The protein localises to the peroxisome. It catalyses the reaction choloyl-CoA + propanoyl-CoA = 3alpha,7alpha,12alpha-trihydroxy-24-oxo-5beta-cholestan-26-oyl-CoA + CoA. With respect to regulation, inhibited by acetyl-CoA. In terms of biological role, catalyzes the thiolytic cleavage of 3-ketoacyl-CoA with 8-16 carbon residues in the acyl group using a ping-pong mechanism whereby binding to 3-ketooctanoyl-CoA results in the release of acetyl-CoA and the subsequent addition of CoA produces 3-ketohexanohyl-CoA. Involved in the biosynthesis of the dauer pheromone by providing short chains of fatty acid that are attached to the ascarylose sugars of the pheromone. The protein is Non-specific lipid-transfer protein-like 2 of Caenorhabditis elegans.